Consider the following 356-residue polypeptide: MNGVSEGTRGCSDRQPGVLTRDRSCSRKMNSSGCLSEEVGSLRPLTVVILSASIVVGVLGNGLVLWMTVFRMARTVSTVCFFHLALADFMLSLSLPIAMYYIVSRQWLLGEWACKLYITFVFLSYFASNCLLVFISVDRCISVLYPVWALNHRTVQRASWLAFGVWLLAAALCSAHLKFRTTRKWNGCTHCYLAFNSDNETAQIWIEGVVEGHIIGTIGHFLLGFLGPLAIIGTCAHLIRAKLLREGWVHANRPKRLLLVLVSAFFIFWSPFNVVLLVHLWRRVMLKEIYHPRMLLILQASFALGCVNSSLNPFLYVFVGRDFQEKFFQSLTSALARAFGEEEFLSSCPRGNAPRE.

Residues 1 to 44 (MNGVSEGTRGCSDRQPGVLTRDRSCSRKMNSSGCLSEEVGSLRP) lie on the Extracellular side of the membrane. Asn30 is a glycosylation site (N-linked (GlcNAc...) asparagine). Residues 45–67 (LTVVILSASIVVGVLGNGLVLWM) traverse the membrane as a helical segment. Residues 68-78 (TVFRMARTVST) are Cytoplasmic-facing. The helical transmembrane segment at 79–100 (VCFFHLALADFMLSLSLPIAMY) threads the bilayer. Residues 101–116 (YIVSRQWLLGEWACKL) are Extracellular-facing. Residues Cys114 and Cys191 are joined by a disulfide bond. Residues 117 to 137 (YITFVFLSYFASNCLLVFISV) form a helical membrane-spanning segment. Residues 138–156 (DRCISVLYPVWALNHRTVQ) lie on the Cytoplasmic side of the membrane. A helical transmembrane segment spans residues 157–178 (RASWLAFGVWLLAAALCSAHLK). Over 179 to 220 (FRTTRKWNGCTHCYLAFNSDNETAQIWIEGVVEGHIIGTIGH) the chain is Extracellular. N-linked (GlcNAc...) asparagine glycosylation is present at Asn199. A helical transmembrane segment spans residues 221–241 (FLLGFLGPLAIIGTCAHLIRA). Topologically, residues 242-257 (KLLREGWVHANRPKRL) are cytoplasmic. The helical transmembrane segment at 258 to 280 (LLVLVSAFFIFWSPFNVVLLVHL) threads the bilayer. Residues 281-300 (WRRVMLKEIYHPRMLLILQA) lie on the Extracellular side of the membrane. A helical transmembrane segment spans residues 301–320 (SFALGCVNSSLNPFLYVFVG). Residues 321–356 (RDFQEKFFQSLTSALARAFGEEEFLSSCPRGNAPRE) lie on the Cytoplasmic side of the membrane.

This sequence belongs to the G-protein coupled receptor 1 family. Expressed in resting primary human macrophages.

Its subcellular location is the cell membrane. G-protein coupled receptor that binds to several ligands including resolvin D1 (RvD1) with high affinity, leading to rapid and transient activation of numerous intracellular signaling pathways. In macrophages, enhances the RvD1-stimulated phagocytic and clearance functions. Macrophages migrate less toward different chemoattractant stimuli but phagocytose more microbial particles. Prevents the increase in Ca(2+) and activation of ERK1/2 used by histamine and its H1 receptor subtype to induce goblet cell secretion by activating PKC and GRK2 to counter-regulate the histamine receptor. In Homo sapiens (Human), this protein is Probable G-protein coupled receptor 32 (GPR32).